The following is a 145-amino-acid chain: D-aminoacyl-tRNA deacylase (145 aa).

Residues 137–138 (GP) carry the Gly-cisPro motif, important for rejection of L-amino acids motif.

This sequence belongs to the DTD family. In terms of assembly, homodimer.

It localises to the cytoplasm. The catalysed reaction is glycyl-tRNA(Ala) + H2O = tRNA(Ala) + glycine + H(+). It carries out the reaction a D-aminoacyl-tRNA + H2O = a tRNA + a D-alpha-amino acid + H(+). Functionally, an aminoacyl-tRNA editing enzyme that deacylates mischarged D-aminoacyl-tRNAs. Also deacylates mischarged glycyl-tRNA(Ala), protecting cells against glycine mischarging by AlaRS. Acts via tRNA-based rather than protein-based catalysis; rejects L-amino acids rather than detecting D-amino acids in the active site. By recycling D-aminoacyl-tRNA to D-amino acids and free tRNA molecules, this enzyme counteracts the toxicity associated with the formation of D-aminoacyl-tRNA entities in vivo and helps enforce protein L-homochirality. The polypeptide is D-aminoacyl-tRNA deacylase (Pseudoalteromonas atlantica (strain T6c / ATCC BAA-1087)).